Consider the following 132-residue polypeptide: uncharacterized protein (132 aa).

The tract at residues 113 to 132 is disordered; the sequence is LDPQSPLHSPPLSTSPDSRR.

This is an uncharacterized protein from Saccharomyces cerevisiae (strain ATCC 204508 / S288c) (Baker's yeast).